Here is a 134-residue protein sequence, read N- to C-terminus: Late embryogenesis abundant protein 6 (134 aa).

Positions Glu-31–His-45 are enriched in basic and acidic residues. 2 disordered regions span residues Glu-31 to Ala-53 and Val-80 to Tyr-134. A coiled-coil region spans residues Met-34–Lys-70. Residues Pro-115 to Gly-127 show a composition bias toward low complexity.

The protein belongs to the LEA type 1 family.

Involved dehydration tolerance. Involved in the adaptive response of vascular plants to withstand water deficit. May possess chaperone-like activity under water deficit. The chain is Late embryogenesis abundant protein 6 from Arabidopsis thaliana (Mouse-ear cress).